A 370-amino-acid polypeptide reads, in one-letter code: A-type ATP synthase subunit C (370 aa).

It belongs to the V-ATPase V0D/AC39 subunit family. As to quaternary structure, has multiple subunits with at least A(3), B(3), C, D, E, F, H, I and proteolipid K(x).

The protein resides in the cell membrane. Functionally, component of the A-type ATP synthase that produces ATP from ADP in the presence of a proton gradient across the membrane. The chain is A-type ATP synthase subunit C from Pyrococcus horikoshii (strain ATCC 700860 / DSM 12428 / JCM 9974 / NBRC 100139 / OT-3).